We begin with the raw amino-acid sequence, 371 residues long: Transcription termination/antitermination protein NusA (371 aa).

Residues 135 to 199 (EDIMTGIVQR…KGPQIYVSRT (65 aa)) form the S1 motif domain. Positions 301–367 (EKATTVIVPD…EPLFTEPETA (67 aa)) constitute a KH domain. The segment at 347 to 371 (GIYPRELEEDDEPLFTEPETAESDE) is disordered. Positions 353–371 (LEEDDEPLFTEPETAESDE) are enriched in acidic residues.

It belongs to the NusA family. In terms of assembly, monomer. Binds directly to the core enzyme of the DNA-dependent RNA polymerase and to nascent RNA.

The protein localises to the cytoplasm. Functionally, participates in both transcription termination and antitermination. The polypeptide is Transcription termination/antitermination protein NusA (Bacillus subtilis (strain 168)).